Here is a 487-residue protein sequence, read N- to C-terminus: Cytochrome P450 monooxygenase pyvB (487 aa).

The helical transmembrane segment at 17 to 37 (PAYSSVVIGALVVCLVCLVWP) threads the bilayer. Heme is bound at residue C426.

The protein belongs to the cytochrome P450 family. Heme serves as cofactor.

Its subcellular location is the membrane. It participates in secondary metabolite biosynthesis. Cytochrome P450 monooxygenase; part of the gene cluster that mediates the biosynthesis of pyranoviolin A, a pyranonigrin analog with a C-3 methoxy group. Initially, the PKS portion of pyvA synthesizes C-10 carbon chain from 5 molecules of malonyl-CoA, which is then condensed with the thiolation (T) domain-bound glycine activated by the adenylation (A) domain. The subsequent chain release by Dieckmann condensation (DKC) could be catalyzed by the TE domain present at the C-terminus of pyvA and/or the alpha/beta hydrolase pyvD, installing the tetramic acid moiety. The FAD-dependent monooxygenase pyvC next epoxidizes one of the olefins of the polyketide part, and the epoxide ring-opening induces the dihydro-gamma-pyrone ring formation. The cytochrome P450 monooxygeanse pyvB would be responsible for the 2 consecutive reactions, in which the dihydro-gamma-pyrone is oxidized to gamma-pyrone and C-7 is hydroxylated to yield pyranonigrin F. Finally, the O-methyltransferase pyvH methylates the C-3 hydroxy group to complete the biosynthesis. The polypeptide is Cytochrome P450 monooxygenase pyvB (Aspergillus violaceofuscus (strain CBS 115571)).